The primary structure comprises 234 residues: Large ribosomal subunit protein uL1 (234 aa).

It belongs to the universal ribosomal protein uL1 family. In terms of assembly, part of the 50S ribosomal subunit.

Its function is as follows. Binds directly to 23S rRNA. The L1 stalk is quite mobile in the ribosome, and is involved in E site tRNA release. In terms of biological role, protein L1 is also a translational repressor protein, it controls the translation of the L11 operon by binding to its mRNA. This chain is Large ribosomal subunit protein uL1, found in Aliivibrio fischeri (strain ATCC 700601 / ES114) (Vibrio fischeri).